The primary structure comprises 201 residues: Esterase TesA (201 aa).

Residues 1-21 form the signal peptide; the sequence is MRALLLSGCLALVLLTQQAAA. Ser-30 serves as the catalytic Nucleophile. Active-site residues include Asp-177 and His-180.

It belongs to the 'GDSL' lipolytic enzyme family.

The protein localises to the secreted. It catalyses the reaction a carboxylic ester + H2O = an alcohol + a carboxylate + H(+). In terms of biological role, esterase that exhibits the highest activity towards Tween detergents and p-nitrophenyl esters of short acyl chain length. Also displays a low thioesterase activity towards palmitoyl-coenzyme A, but is not active towards acetyl-coenzyme A. The polypeptide is Esterase TesA (tesA) (Pseudomonas aeruginosa (strain ATCC 15692 / DSM 22644 / CIP 104116 / JCM 14847 / LMG 12228 / 1C / PRS 101 / PAO1)).